We begin with the raw amino-acid sequence, 459 residues long: MNQGKIVQCIGAVVDVEFAREEMPKVYDALVLEGSELTLEVQQQLGDGVVRTIALGSSEGLRRGMMVTNTGDQIRVPVGTKTLGRIMDVLGTPIDEMGPIGAEQNRSIHQKAPAFDELSASTELLETGIKVIDLVCPFAKGGKVGLFGGAGVGKTVNMMELIRNIAIEHSGYSVFAGVGERTREGNDFYHEMKDSNVLDKVALVYGQMNEPPGNRLRVALTGLTMAEHFRDEGRDVLLFVDNIYRFTLAGTEVSALLGRMPSAVGYQPTLAEEMGRLQERITSTKSGSITSIQAVYVPADDLTDPSPATTFGHLDATVVLSRDIASLGIYPAVDPLDSTSRQLDPLVVGEEHYSTARAVQQTLQRYKELRDIIAILGMDELSPEDKLAVARARKIQRFLSQPFNVAEVFTGAPGKYVPLKETIKGFKGIVSGEYDHLPEQAFYMVGGIDEAVEKAKTLQ.

ATP is bound at residue 148–155 (GGAGVGKT).

The protein belongs to the ATPase alpha/beta chains family. In terms of assembly, F-type ATPases have 2 components, CF(1) - the catalytic core - and CF(0) - the membrane proton channel. CF(1) has five subunits: alpha(3), beta(3), gamma(1), delta(1), epsilon(1). CF(0) has three main subunits: a(1), b(2) and c(9-12). The alpha and beta chains form an alternating ring which encloses part of the gamma chain. CF(1) is attached to CF(0) by a central stalk formed by the gamma and epsilon chains, while a peripheral stalk is formed by the delta and b chains.

It localises to the cell inner membrane. The catalysed reaction is ATP + H2O + 4 H(+)(in) = ADP + phosphate + 5 H(+)(out). Its function is as follows. Produces ATP from ADP in the presence of a proton gradient across the membrane. The catalytic sites are hosted primarily by the beta subunits. The protein is ATP synthase subunit beta 1 of Nitrosospira multiformis (strain ATCC 25196 / NCIMB 11849 / C 71).